Consider the following 315-residue polypeptide: Olfactory receptor 3A2 (315 aa).

Residues 1 to 29 (MEPEAGTNRTAVAEFILLGLVQTEEMQPV) lie on the Extracellular side of the membrane. Asn8 carries N-linked (GlcNAc...) asparagine glycosylation. The chain crosses the membrane as a helical span at residues 30–52 (VFVLFLFAYLVTIGGNLSILAAI). At 53-60 (LVEPKLHA) the chain is on the cytoplasmic side. A helical membrane pass occupies residues 61–82 (PMYFFLGNLSVLDVGCITVTVP). Topologically, residues 83-103 (AMLGRLLSHKSTISYDACLSQ) are extracellular. Cys100 and Cys192 are disulfide-bonded. Residues 104-123 (LFFFHLLAGMDCFLLTAMAY) form a helical membrane-spanning segment. At 124–143 (DRFLAICWPLTYSTRMSQTV) the chain is on the cytoplasmic side. Residues 144 to 161 (QRMLVAASWACAFTNALT) traverse the membrane as a helical segment. Over 162–199 (HTVAMSTLNFCGPNEVNHFYCDLPQLFQLSCSSTQLNE) the chain is Extracellular. A helical membrane pass occupies residues 200-223 (LLLFAVGFIMAGTPLVLIITSYSH). The Cytoplasmic segment spans residues 224–240 (VAAAVLRIRSVEGWKKA). Residues 241–264 (FSTCGSHLTVVCLFFGTGIFNYMR) form a helical membrane-spanning segment. Over 265-275 (LGSEEASDKDK) the chain is Extracellular. The helical transmembrane segment at 276-295 (GVGVFNTVINPMLNPLIYSL) threads the bilayer. Residues 296–315 (RNPDVQGALWRIFLGRRSLT) are Cytoplasmic-facing.

The protein belongs to the G-protein coupled receptor 1 family.

Its subcellular location is the cell membrane. Its function is as follows. Odorant receptor. The chain is Olfactory receptor 3A2 (OR3A2) from Pan troglodytes (Chimpanzee).